A 97-amino-acid polypeptide reads, in one-letter code: Small ribosomal subunit protein bS20 (97 aa).

Belongs to the bacterial ribosomal protein bS20 family.

Binds directly to 16S ribosomal RNA. The sequence is that of Small ribosomal subunit protein bS20 from Prochlorococcus marinus (strain MIT 9515).